Reading from the N-terminus, the 213-residue chain is MEAFNTVTAIVAPLDRANVDTDAIIPKQFLKSIKRSGFGPNLFDEWRYLDQGQPGKSNEGRPLNKDFVLNLPRYAGARILLARDNFGCGSSREHAPWALQDFGFRVIIAPSFADIFFNNCFKNGILPIVQEASVVDSLFAEVAAQPGYQLTVDLPAQRITTPSGRSIAFEVDPFRKHCLIHGLDDIGLTLQHVADIQAYESKHKGQAPWAFLD.

It belongs to the LeuD family. LeuD type 1 subfamily. As to quaternary structure, heterodimer of LeuC and LeuD.

The catalysed reaction is (2R,3S)-3-isopropylmalate = (2S)-2-isopropylmalate. It participates in amino-acid biosynthesis; L-leucine biosynthesis; L-leucine from 3-methyl-2-oxobutanoate: step 2/4. Its function is as follows. Catalyzes the isomerization between 2-isopropylmalate and 3-isopropylmalate, via the formation of 2-isopropylmaleate. This Magnetococcus marinus (strain ATCC BAA-1437 / JCM 17883 / MC-1) protein is 3-isopropylmalate dehydratase small subunit.